Here is a 535-residue protein sequence, read N- to C-terminus: Phosphoenolpyruvate carboxykinase (ATP) (535 aa).

Substrate is bound by residues Arg-59, Tyr-201, and Lys-207. ATP-binding positions include Lys-207, His-226, and 243-251; that span reads GLSGTGKTT. The Mn(2+) site is built by Lys-207 and His-226. A Mn(2+)-binding site is contributed by Asp-264. ATP is bound by residues Glu-292, Arg-328, 444 to 445, and Thr-450; that span reads RI. Arg-328 contacts substrate.

Belongs to the phosphoenolpyruvate carboxykinase (ATP) family. Mn(2+) is required as a cofactor.

It is found in the cytoplasm. It carries out the reaction oxaloacetate + ATP = phosphoenolpyruvate + ADP + CO2. It functions in the pathway carbohydrate biosynthesis; gluconeogenesis. Involved in the gluconeogenesis. Catalyzes the conversion of oxaloacetate (OAA) to phosphoenolpyruvate (PEP) through direct phosphoryl transfer between the nucleoside triphosphate and OAA. The sequence is that of Phosphoenolpyruvate carboxykinase (ATP) from Porphyromonas gingivalis (strain ATCC BAA-308 / W83).